The sequence spans 172 residues: Protein-export protein SecB (172 aa).

It belongs to the SecB family. As to quaternary structure, homotetramer, a dimer of dimers. One homotetramer interacts with 1 SecA dimer.

The protein resides in the cytoplasm. Its function is as follows. One of the proteins required for the normal export of preproteins out of the cell cytoplasm. It is a molecular chaperone that binds to a subset of precursor proteins, maintaining them in a translocation-competent state. It also specifically binds to its receptor SecA. The chain is Protein-export protein SecB from Xylella fastidiosa (strain 9a5c).